We begin with the raw amino-acid sequence, 302 residues long: 4-hydroxy-tetrahydrodipicolinate synthase (302 aa).

Thr-55 lines the pyruvate pocket. Tyr-144 acts as the Proton donor/acceptor in catalysis. Lys-172 serves as the catalytic Schiff-base intermediate with substrate. Position 214 (Val-214) interacts with pyruvate.

Belongs to the DapA family. Homotetramer; dimer of dimers.

It localises to the cytoplasm. It carries out the reaction L-aspartate 4-semialdehyde + pyruvate = (2S,4S)-4-hydroxy-2,3,4,5-tetrahydrodipicolinate + H2O + H(+). The protein operates within amino-acid biosynthesis; L-lysine biosynthesis via DAP pathway; (S)-tetrahydrodipicolinate from L-aspartate: step 3/4. Its function is as follows. Catalyzes the condensation of (S)-aspartate-beta-semialdehyde [(S)-ASA] and pyruvate to 4-hydroxy-tetrahydrodipicolinate (HTPA). This is 4-hydroxy-tetrahydrodipicolinate synthase from Synechococcus sp. (strain CC9605).